We begin with the raw amino-acid sequence, 679 residues long: Recombination repair protein 1 (679 aa).

The disordered stretch occupies residues 1-407; it reads MPRVKAVKKQ…TKKAKKAETK (407 aa). Over residues 45–55 the composition is skewed to basic residues; the sequence is AKGKPRARKAT. Residues 106-116 are compositionally biased toward basic and acidic residues; sequence ATAEAEPEPKV. Residues T133 and T140 each carry the phosphothreonine modification. S142 carries the phosphoserine modification. Basic and acidic residues-rich tracts occupy residues 179–189 and 203–214; these read EPPKQRARKEA and SKEKVQKAETAA. S258 is subject to Phosphoserine. Basic and acidic residues predominate over residues 312-347; that stretch reads KKEGKEPAPGKKQKKSADKENGVVEEEAKPSTETKP. Residues 428 to 679 form an AP endonuclease region; it reads KICSWNVAGL…HCPITIFFNI (252 aa). E461 provides a ligand contact to Mg(2+). The active site involves Y533. Residues D572, N574, and D669 each contribute to the Mg(2+) site. The active-site Proton donor/acceptor is D572.

It belongs to the DNA repair enzymes AP/ExoA family. As to quaternary structure, interacts with the zeta DNA polymerase complex; interacts (via the N-terminus) with the accessory subunit PolZ2/Rev7 and also interacts with the catalytic component PolZ1, however the interaction with PolZ1 is likely via PolZ2. Mg(2+) serves as cofactor. Mn(2+) is required as a cofactor.

The protein localises to the nucleus. The enzyme catalyses Exonucleolytic cleavage in the 3'- to 5'-direction to yield nucleoside 5'-phosphates.. Functionally, plays a role in the cellular response to oxidative stress by promoting DNA repair mechanisms such as base excision repair and possibly homologous recombination repair. Functions as an apurinic/apyrimidinic (AP) endodeoxyribonuclease in the DNA base excision repair (BER) pathway of DNA lesions induced by oxidative and alkylating agents. Likely to initiate repair of AP sites in DNA by catalyzing hydrolytic incision of the phosphodiester backbone immediately adjacent to the damage, generating a single-strand break with 5'-deoxyribose phosphate and 3'-hydroxyl ends. Has a 3'-5' exoribonuclease activity on mismatched deoxyribonucleotides at the 3' termini of nicked or gapped DNA molecules during short-patch BER. Has apurinic endonuclease and double-stranded DNA 3'-exonuclease activities and carries out single-stranded DNA renaturation in a Mg(2+)-dependent manner. Activity is more efficient in purine-rich regions of dsDNA than in pyrimidine-rich regions. The chain is Recombination repair protein 1 from Drosophila melanogaster (Fruit fly).